A 197-amino-acid chain; its full sequence is MADRKAQVSRDTLETQISVELNLDGTGTGKFNTGVPFLEHMMDQIARHGFIDLDVTCKGDTYIDDHHSVEDIGITIGQAMAKAVGDKRGIRRYGHAYVPLDEALSRVVIDFSGRPGLIMNIPFTQKRIGKFDTELFWEFFQGFVNHAGVTLHVDCLRGENAHHQIETVFKAFGRSLRMALERDERLGDAMPSTKGTL.

This sequence belongs to the imidazoleglycerol-phosphate dehydratase family.

It localises to the cytoplasm. It carries out the reaction D-erythro-1-(imidazol-4-yl)glycerol 3-phosphate = 3-(imidazol-4-yl)-2-oxopropyl phosphate + H2O. The protein operates within amino-acid biosynthesis; L-histidine biosynthesis; L-histidine from 5-phospho-alpha-D-ribose 1-diphosphate: step 6/9. This Saccharophagus degradans (strain 2-40 / ATCC 43961 / DSM 17024) protein is Imidazoleglycerol-phosphate dehydratase.